The chain runs to 160 residues: Ribosomal RNA large subunit methyltransferase H (160 aa).

Glycine 108 lines the S-adenosyl-L-methionine pocket.

Belongs to the RNA methyltransferase RlmH family. In terms of assembly, homodimer.

It localises to the cytoplasm. The catalysed reaction is pseudouridine(1915) in 23S rRNA + S-adenosyl-L-methionine = N(3)-methylpseudouridine(1915) in 23S rRNA + S-adenosyl-L-homocysteine + H(+). Functionally, specifically methylates the pseudouridine at position 1915 (m3Psi1915) in 23S rRNA. This is Ribosomal RNA large subunit methyltransferase H from Rhodopseudomonas palustris (strain BisA53).